We begin with the raw amino-acid sequence, 140 residues long: Nucleoside diphosphate kinase (140 aa).

The ATP site is built by K11, F59, R87, T93, R104, and N114. H117 functions as the Pros-phosphohistidine intermediate in the catalytic mechanism.

Belongs to the NDK family. As to quaternary structure, homotetramer. It depends on Mg(2+) as a cofactor.

The protein resides in the cytoplasm. The catalysed reaction is a 2'-deoxyribonucleoside 5'-diphosphate + ATP = a 2'-deoxyribonucleoside 5'-triphosphate + ADP. The enzyme catalyses a ribonucleoside 5'-diphosphate + ATP = a ribonucleoside 5'-triphosphate + ADP. Its function is as follows. Major role in the synthesis of nucleoside triphosphates other than ATP. The ATP gamma phosphate is transferred to the NDP beta phosphate via a ping-pong mechanism, using a phosphorylated active-site intermediate. This chain is Nucleoside diphosphate kinase, found in Sinorhizobium medicae (strain WSM419) (Ensifer medicae).